The chain runs to 905 residues: Protein translocase subunit SecA (905 aa).

Residues Gln-87, 105–109, and Asp-509 each bind ATP; that span reads GEGKT. Zn(2+) contacts are provided by Cys-890, Cys-892, Cys-901, and His-902.

The protein belongs to the SecA family. In terms of assembly, monomer and homodimer. Part of the essential Sec protein translocation apparatus which comprises SecA, SecYEG and auxiliary proteins SecDF-YajC and YidC. It depends on Zn(2+) as a cofactor.

Its subcellular location is the cell inner membrane. The protein localises to the cytoplasm. The catalysed reaction is ATP + H2O + cellular proteinSide 1 = ADP + phosphate + cellular proteinSide 2.. Functionally, part of the Sec protein translocase complex. Interacts with the SecYEG preprotein conducting channel. Has a central role in coupling the hydrolysis of ATP to the transfer of proteins into and across the cell membrane, serving both as a receptor for the preprotein-SecB complex and as an ATP-driven molecular motor driving the stepwise translocation of polypeptide chains across the membrane. The protein is Protein translocase subunit SecA of Acinetobacter baylyi (strain ATCC 33305 / BD413 / ADP1).